Here is a 432-residue protein sequence, read N- to C-terminus: 3-phosphoshikimate 1-carboxyvinyltransferase (432 aa).

3-phosphoshikimate contacts are provided by lysine 23, serine 24, and arginine 28. Lysine 23 contributes to the phosphoenolpyruvate binding site. 2 residues coordinate phosphoenolpyruvate: glycine 95 and arginine 123. Residues serine 167, glutamine 169, aspartate 317, and lysine 344 each contribute to the 3-phosphoshikimate site. Residue glutamine 169 participates in phosphoenolpyruvate binding. Aspartate 317 (proton acceptor) is an active-site residue. Positions 348 and 390 each coordinate phosphoenolpyruvate.

This sequence belongs to the EPSP synthase family. In terms of assembly, monomer.

It localises to the cytoplasm. It carries out the reaction 3-phosphoshikimate + phosphoenolpyruvate = 5-O-(1-carboxyvinyl)-3-phosphoshikimate + phosphate. It participates in metabolic intermediate biosynthesis; chorismate biosynthesis; chorismate from D-erythrose 4-phosphate and phosphoenolpyruvate: step 6/7. Functionally, catalyzes the transfer of the enolpyruvyl moiety of phosphoenolpyruvate (PEP) to the 5-hydroxyl of shikimate-3-phosphate (S3P) to produce enolpyruvyl shikimate-3-phosphate and inorganic phosphate. In Staphylococcus aureus (strain JH9), this protein is 3-phosphoshikimate 1-carboxyvinyltransferase.